Here is a 414-residue protein sequence, read N- to C-terminus: Cell division protein FtsA (414 aa).

Belongs to the FtsA/MreB family. In terms of assembly, self-interacts. Interacts with FtsZ.

Its subcellular location is the cell inner membrane. In terms of biological role, cell division protein that is involved in the assembly of the Z ring. May serve as a membrane anchor for the Z ring. The polypeptide is Cell division protein FtsA (Neisseria meningitidis serogroup B (strain ATCC BAA-335 / MC58)).